The primary structure comprises 818 residues: Serine/threonine-protein phosphatase 4 regulatory subunit 3 (818 aa).

The 100-residue stretch at 1 to 100 (MTDTRRRVKV…DEIWEKICQV (100 aa)) folds into the WH1 domain. Over residues 670–681 (FNTDEEDLEDGE) the composition is skewed to acidic residues. Positions 670–818 (FNTDEEDLED…PLSKKSKLSS (149 aa)) are disordered. Residues 703–718 (FMERKKLKDSEEKEVL) are compositionally biased toward basic and acidic residues. The segment covering 729-775 (SPSFKLSFSSSPKASLSSPPTASLHPGSPGSPSSPGTGARSSPPSAA) has biased composition (low complexity). Phosphoserine occurs at positions 769 and 770. The span at 788–803 (YPDDDEEDEDEEDADS) shows a compositional bias: acidic residues.

The protein belongs to the SMEK family. As to quaternary structure, serine/threonine-protein phosphatase 4 (PP4) occurs in different assemblies of the catalytic and one or more regulatory subunits.

In terms of biological role, regulatory subunit of serine/threonine-protein phosphatase 4. The polypeptide is Serine/threonine-protein phosphatase 4 regulatory subunit 3 (smek1) (Danio rerio (Zebrafish)).